The chain runs to 230 residues: Enolase-phosphatase E1 (230 aa).

This sequence belongs to the HAD-like hydrolase superfamily. MasA/MtnC family. As to quaternary structure, monomer. It depends on Mg(2+) as a cofactor.

The enzyme catalyses 5-methylsulfanyl-2,3-dioxopentyl phosphate + H2O = 1,2-dihydroxy-5-(methylsulfanyl)pent-1-en-3-one + phosphate. The protein operates within amino-acid biosynthesis; L-methionine biosynthesis via salvage pathway; L-methionine from S-methyl-5-thio-alpha-D-ribose 1-phosphate: step 3/6. Its pathway is amino-acid biosynthesis; L-methionine biosynthesis via salvage pathway; L-methionine from S-methyl-5-thio-alpha-D-ribose 1-phosphate: step 4/6. Bifunctional enzyme that catalyzes the enolization of 2,3-diketo-5-methylthiopentyl-1-phosphate (DK-MTP-1-P) into the intermediate 2-hydroxy-3-keto-5-methylthiopentenyl-1-phosphate (HK-MTPenyl-1-P), which is then dephosphorylated to form the acireductone 1,2-dihydroxy-3-keto-5-methylthiopentene (DHK-MTPene). In Bradyrhizobium sp. (strain BTAi1 / ATCC BAA-1182), this protein is Enolase-phosphatase E1.